The primary structure comprises 346 residues: Annexin A1 (346 aa).

Position 2 is an N-acetylalanine (alanine 2). At serine 5 the chain carries Phosphoserine; by TRPM7. Residue glutamine 19 forms an Isoglutamyl lysine isopeptide (Gln-Lys) (interchain with K-?) linkage. Position 21 is a phosphotyrosine; by EGFR (tyrosine 21). The tract at residues 25-47 is disordered; sequence VKGSKGGPGSAVSPYPTFNPSSD. Serine 34 and serine 37 each carry phosphoserine. Threonine 41 carries the post-translational modification Phosphothreonine. Annexin repeat units follow at residues 42-113, 114-185, 197-269, and 273-344; these read FNPS…ALLK, TPAQ…SLAK, DLAD…VVVK, and SKPM…ALCG. Position 58 is an N6-acetyllysine (lysine 58). Ca(2+) is bound by residues glycine 59, valine 60, glutamate 62, lysine 97, leucine 100, glutamate 105, methionine 127, glycine 129, glycine 131, threonine 132, and glutamate 134. Threonine 136 is subject to Phosphothreonine. Ca(2+) is bound by residues aspartate 171, glycine 210, and arginine 213. Lysine 214 participates in a covalent cross-link: Glycyl lysine isopeptide (Lys-Gly) (interchain with G-Cter in SUMO1); alternate. A Glycyl lysine isopeptide (Lys-Gly) (interchain with G-Cter in SUMO2); alternate cross-link involves residue lysine 214. Position 215 (glycine 215) interacts with Ca(2+). Residue lysine 239 is modified to N6-acetyllysine. Aspartate 253, glutamate 255, and leucine 256 together coordinate Ca(2+). Residue lysine 257 forms a Glycyl lysine isopeptide (Lys-Gly) (interchain with G-Cter in SUMO1) linkage. Residues glutamate 261, methionine 286, glycine 288, and glycine 290 each coordinate Ca(2+). The residue at position 312 (lysine 312) is an N6-acetyllysine. The cysteines at positions 324 and 343 are disulfide-linked. Ca(2+) contacts are provided by leucine 328, glutamate 330, and threonine 331. A Glycyl lysine isopeptide (Lys-Gly) (interchain with G-Cter in SUMO1) cross-link involves residue lysine 332. Glutamate 336 contributes to the Ca(2+) binding site.

The protein belongs to the annexin family. As to quaternary structure, homodimer; non-covalently linked. Homodimer; linked by transglutamylation. Homodimers linked by transglutamylation are observed in placenta, but not in other tissues. Interacts with S100A11. Heterotetramer, formed by two molecules each of S100A11 and ANXA1. Interacts with DYSF. Interacts with EGFR. Phosphorylated by EGFR. Phosphorylated by protein kinase C and TRPM7. Phosphorylated in response to EGF treatment. Post-translationally, sumoylated. In terms of processing, proteolytically cleaved by cathepsin CTSG to release the active N-terminal peptide Ac2-26. As to expression, detected in lung and spleen (at protein level).

It localises to the nucleus. It is found in the cytoplasm. Its subcellular location is the cell projection. The protein localises to the cilium. The protein resides in the basolateral cell membrane. It localises to the lateral cell membrane. It is found in the early endosome. Its subcellular location is the cell membrane. The protein localises to the cytoplasmic vesicle membrane. The protein resides in the apical cell membrane. It localises to the membrane. It is found in the endosome. Its subcellular location is the secreted. The protein localises to the extracellular space. The protein resides in the extracellular exosome. It localises to the cytoplasmic vesicle. It is found in the secretory vesicle lumen. Its subcellular location is the phagocytic cup. Plays important roles in the innate immune response as effector of glucocorticoid-mediated responses and regulator of the inflammatory process. Has anti-inflammatory activity. Plays a role in glucocorticoid-mediated down-regulation of the early phase of the inflammatory response. Contributes to the adaptive immune response by enhancing signaling cascades that are triggered by T-cell activation, regulates differentiation and proliferation of activated T-cells. Promotes the differentiation of T-cells into Th1 cells and negatively regulates differentiation into Th2 cells. Has no effect on unstimulated T-cells. Negatively regulates hormone exocytosis via activation of the formyl peptide receptors and reorganization of the actin cytoskeleton. Has high affinity for Ca(2+) and can bind up to eight Ca(2+) ions. Displays Ca(2+)-dependent binding to phospholipid membranes. Plays a role in the formation of phagocytic cups and phagosomes. Plays a role in phagocytosis by mediating the Ca(2+)-dependent interaction between phagosomes and the actin cytoskeleton. Functionally, functions at least in part by activating the formyl peptide receptors and downstream signaling cascades. Promotes chemotaxis of granulocytes and monocytes via activation of the formyl peptide receptors. Promotes rearrangement of the actin cytoskeleton, cell polarization and cell migration. Promotes resolution of inflammation and wound healing. Acts via neutrophil N-formyl peptide receptors to enhance the release of CXCL2. This Sus scrofa (Pig) protein is Annexin A1 (ANXA1).